Consider the following 192-residue polypeptide: Interleukin-18 (192 aa).

The propeptide occupies Met1 to Asp35.

It belongs to the IL-1 family. Forms a ternary complex with ligand-binding receptor subunit IL18R1 and signaling receptor subunit IL18RAP at the plasma membrane. Mature IL18 first binds to IL18R1 forming a low affinity binary complex, which then interacts with IL18RAP to form a high affinity ternary complex that signals inside the cell. Interacts with cargo receptor TMED10; the interaction mediates the translocation from the cytoplasm into the ERGIC (endoplasmic reticulum-Golgi intermediate compartment) and thereby secretion. In terms of processing, the pro-IL-18 precursor is processed by CASP1, CASP4 or CASP5 to yield its mature, active form. The pro-IL-18 precursor features autoinhibitory interactions between the propeptide and the post-cleavage-site region, preventing recognition by the IL18R1 receptor. Processing by CASP1, CASP4 or CASP5 induces conformational changes to generate critical receptor-binding sites. The mature form is then secreted and released in the extracellular milieu by passing through the gasdermin-D (GSDMD) pore. In contrast, cleavage by CASP3 inactivates IL18.

The protein localises to the cytoplasm. The protein resides in the cytosol. It localises to the secreted. Its function is as follows. Pro-inflammatory cytokine primarily involved in epithelial barrier repair, polarized T-helper 1 (Th1) cell and natural killer (NK) cell immune responses. Upon binding to IL18R1 and IL18RAP, forms a signaling ternary complex which activates NF-kappa-B, triggering synthesis of inflammatory mediators. Synergizes with IL12/interleukin-12 to induce IFNG synthesis from T-helper 1 (Th1) cells and natural killer (NK) cells. Involved in transduction of inflammation downstream of pyroptosis: its mature form is specifically released in the extracellular milieu by passing through the gasdermin-D (GSDMD) pore. The chain is Interleukin-18 (IL18) from Capra hircus (Goat).